Here is an 868-residue protein sequence, read N- to C-terminus: Lysosomal cholesterol signaling protein (868 aa).

At 1-36 the chain is on the lumenal side; it reads MDSYFSAKNSTLAGDMNATWPASHGFNATGDPPSMS. The tract at residues 1–368 is PIN-like transporter; that stretch reads MDSYFSAKNS…SAWLLTFPTM (368 aa). Residues asparagine 9, asparagine 17, and asparagine 27 are each glycosylated (N-linked (GlcNAc...) asparagine). The helical transmembrane segment at 37-57 threads the bilayer; sequence ITRLFPALLECFGIVLCGYIA. Cholesterol is bound by residues phenylalanine 41 and tyrosine 55. Topologically, residues 58–77 are cytoplasmic; sequence GRANIITSTQAKGLGNFVSR. A helical membrane pass occupies residues 78 to 98; that stretch reads FALPALLFKNMVVLNFSNVDW. The Lumenal segment spans residues 99-102; sequence AFLY. A helical membrane pass occupies residues 103-123; sequence SVLIGKASVFFIVCVLTLLVA. The Cytoplasmic segment spans residues 124-131; the sequence is SPESRFSK. Residues 132–152 traverse the membrane as a discontinuously helical segment; sequence AGLFPIFATQSNDFALGYPIV. Residues 153 to 165 lie on the Lumenal side of the membrane; that stretch reads EALYQSTYPEYLQ. The helical transmembrane segment at 166–186 threads the bilayer; the sequence is YIYLVAPISLMMLNPIGFIFC. Residues 187 to 211 lie on the Cytoplasmic side of the membrane; that stretch reads EIQKSKDTQNASQNKAKIVGLGFLR. Residues 212-232 traverse the membrane as a discontinuously helical segment; it reads VLQNPIVFMVFVGIAFNFILD. The Lumenal segment spans residues 233–241; it reads KKIPVYMEN. Residues 242-262 traverse the membrane as a discontinuously helical segment; sequence FLDGLANSFSGSALFYLGLTM. Residues 263 to 271 are Cytoplasmic-facing; that stretch reads VGKIRRLKK. Cholesterol is bound by residues glycine 264, lysine 265, and isoleucine 266. The helical transmembrane segment at 272–292 threads the bilayer; sequence SAFVVLTLLITAKLLVLPLLC. Topologically, residues 293–313 are lumenal; the sequence is REMVELLDKGDSVVNHTSLSN. A glycan (N-linked (GlcNAc...) asparagine) is linked at asparagine 307. The discontinuously helical transmembrane segment at 314–334 threads the bilayer; that stretch reads YAFLYGVFPVAPGVAIFATQF. At 335–344 the chain is on the cytoplasmic side; the sequence is NMEVEIITSG. Residues 345–365 form a helical membrane-spanning segment; that stretch reads MVISTFVSAPIMYVSAWLLTF. Residues 366 to 379 are Lumenal-facing; the sequence is PTMDAKPLAYAIQN. Residues 378–715 form a GPCR region; that stretch reads QNVSFDISII…FGIFGLDKHL (338 aa). Asparagine 379 is a glycosylation site (N-linked (GlcNAc...) asparagine). The chain crosses the membrane as a helical span at residues 380–400; sequence VSFDISIISLVSLIWSLSILL. Topologically, residues 401–412 are cytoplasmic; it reads LSKKYKQLPHML. A helical transmembrane segment spans residues 413–433; that stretch reads TANLLIAQTIVCAGMMIWNFV. At 434–436 the chain is on the lumenal side; the sequence is KEK. The chain crosses the membrane as a helical span at residues 437-457; sequence NFVGQILVFVLLYSSLYSTYL. Over 458–478 the chain is Cytoplasmic; sequence WTGLLAVSLFLLKKRESVQLP. Residues 479 to 499 form a helical membrane-spanning segment; it reads VGIIIISGWGIPALLVGVLLI. The Lumenal portion of the chain corresponds to 500 to 518; the sequence is TGKHNGDSIDSAFFYGKEQ. A helical transmembrane segment spans residues 519–539; that stretch reads MITTAVTLFCSILIAGVSLMC. At 540-658 the chain is on the cytoplasmic side; the sequence is MNRTTQAGHY…GDPQLTRHVL (119 aa). The interval 550–582 is disordered; it reads EGFGQSQNHKPVEPGSTAFEENPAPTNEPELFP. A cholesterol-binding site is contributed by arginine 655. A helical membrane pass occupies residues 659-679; that stretch reads LCLLLIIGLFANLSSCLWWLF. Topologically, residues 680–689 are lumenal; that stretch reads NHETGRLYVE. The chain crosses the membrane as a helical span at residues 690 to 710; the sequence is LQFFCAVFNFGQGFISFGIFG. The Cytoplasmic segment spans residues 711-868; it reads LDKHLIILPF…SSPPSVSPKT (158 aa). The 79-residue stretch at 755–833 folds into the DEP domain; that stretch reads YHRDLCIRNI…DEYLFYRFLQ (79 aa). The tract at residues 836-868 is disordered; it reads PEQSPPARTLRDHQEESYKEIGHSSPPSVSPKT. Basic and acidic residues predominate over residues 844-857; sequence TLRDHQEESYKEIG.

Homodimer; via the transporter region and DEP domain. Interacts with the GATOR1 complex; preventing interaction between GATOR1 and KICSTOR; interaction is disrupted upon cholesterol starvation. In terms of tissue distribution, widely expressed in adult tissues and during development. In brain, widely distributed in forebrain regions, while it shows a more restricted distribution in the midbrain and hindbrain regions. Expressed at highest level in the lateral part of striatum and hippocampus.

It localises to the lysosome membrane. In terms of biological role, cholesterol-binding protein that acts as a regulator of mTORC1 signaling pathway. Acts as a sensor of cholesterol to signal cholesterol sufficiency to mTORC1: in presence of cholesterol, binds cholesterol, leading to disruption of the interaction between the GATOR1 and KICSTOR complexes and promotion of mTORC1 signaling. Upon cholesterol starvation, GPR155/LYCHOS is unable to perturb the association between GATOR1 and KICSTOR, leading to mTORC1 signaling inhibition. Binds indole-3-acetic acid and may play a role in tryptophan metabolism. In Mus musculus (Mouse), this protein is Lysosomal cholesterol signaling protein.